Reading from the N-terminus, the 561-residue chain is Centromere protein T (561 aa).

Residues 1 to 83 (MADHNPDSDS…HIQASGHLEE (83 aa)) are disordered. Positions 18-27 (RVLDTADPRT) are enriched in basic and acidic residues. A compositionally biased stretch (low complexity) spans 34–46 (ARAGARRALLETA). Serine 47 is subject to Phosphoserine. A Phosphothreonine modification is found at threonine 85. Positions 93–421 (ILLTAPESSI…RHHQFLEPAP (329 aa)) are flexible stalk domain. Disordered regions lie at residues 256 to 292 (HSLP…PGKP) and 333 to 457 (AEKK…DPHK). Residues 276–288 (KTQSSGPGLQKNS) are compositionally biased toward polar residues. 3 positions are modified to phosphoserine: serine 343, serine 345, and serine 356. The segment covering 357-367 (RVEEAEGHTEV) has biased composition (basic and acidic residues). Phosphoserine occurs at positions 373, 385, 386, and 397. Over residues 395–407 (AASPESASSTPES) the composition is skewed to low complexity.

This sequence belongs to the CENP-T/CNN1 family. In terms of assembly, component of the CENPA-CAD complex, composed of CENPI, CENPK, CENPL, CENPO, CENPP, CENPQ, CENPR and CENPS. The CENPA-CAD complex is probably recruited on centromeres by the CENPA-NAC complex, at least composed of CENPA, CENPC, CENPH, CENPM, CENPN, CENPT and CENPU. Identified in a centromeric complex containing histones H2A, H2B, H3 and H4, and at least CENPA, CENPB, CENPC, CENPT, CENPN, HJURP, SUPT16H, SSRP1 and RSF1. Interacts (via N-terminus) with the NDC80 complex. Heterodimer with CENPW; this dimer coassembles with CENPS-CENPX heterodimers at centromeres to form the tetrameric CENP-T-W-S-X complex. Post-translationally, dynamically phosphorylated at Ser-47 and probably also other sites during the cell cycle. Phosphorylated at Ser-47 during G2 phase, metaphase and anaphase, but not during telophase or G1 phase.

The protein localises to the nucleus. The protein resides in the chromosome. It localises to the centromere. Its subcellular location is the kinetochore. In terms of biological role, component of the CENPA-NAC (nucleosome-associated) complex, a complex that plays a central role in assembly of kinetochore proteins, mitotic progression and chromosome segregation. The CENPA-NAC complex recruits the CENPA-CAD (nucleosome distal) complex and may be involved in incorporation of newly synthesized CENPA into centromeres. Part of a nucleosome-associated complex that binds specifically to histone H3-containing nucleosomes at the centromere, as opposed to nucleosomes containing CENPA. Component of the heterotetrameric CENP-T-W-S-X complex that binds and supercoils DNA, and plays an important role in kinetochore assembly. CENPT has a fundamental role in kinetochore assembly and function. It is one of the inner kinetochore proteins, with most further proteins binding downstream. Required for normal chromosome organization and normal progress through mitosis. This Homo sapiens (Human) protein is Centromere protein T (CENPT).